The following is a 107-amino-acid chain: Small leucine-rich protein 1 (107 aa).

The next 2 membrane-spanning stretches (helical) occupy residues 19-39 (AALV…LAMS) and 53-73 (FLFF…IAYF). Positions 85 to 107 (SQNCDRQHNPKDGSSLYQRMKWT) are disordered.

The protein resides in the membrane. This chain is Small leucine-rich protein 1 (SMLR1), found in Homo sapiens (Human).